The following is a 166-amino-acid chain: Small ribosomal subunit protein uS5 (166 aa).

An S5 DRBM domain is found at 11-74 (LQEKLIAVNR…EKARRNMMNV (64 aa)).

The protein belongs to the universal ribosomal protein uS5 family. In terms of assembly, part of the 30S ribosomal subunit. Contacts proteins S4 and S8.

In terms of biological role, with S4 and S12 plays an important role in translational accuracy. Functionally, located at the back of the 30S subunit body where it stabilizes the conformation of the head with respect to the body. This chain is Small ribosomal subunit protein uS5, found in Sodalis glossinidius (strain morsitans).